The following is a 519-amino-acid chain: Sorting nexin-2 (519 aa).

Low complexity predominate over residues 30–50; sequence STVSTLESSPSSPEPASLPAE. A disordered region spans residues 30–62; that stretch reads STVSTLESSPSSPEPASLPAEDISANSNGSKPV. Ser97 bears the Phosphoserine mark. Phosphothreonine occurs at positions 101 and 104. Ser117 and Ser119 each carry phosphoserine. Residues 140 to 269 enclose the PX domain; the sequence is FDIEIGVSDP…QFLESSELPR (130 aa). Arg183, Ser185, Lys211, and Arg235 together coordinate a 1,2-diacyl-sn-glycero-3-phospho-(1D-myo-inositol-3-phosphate). Ser185 bears the Phosphoserine mark. The tract at residues 260–519 is interaction with RhoG; it reads QFLESSELPR…AFLPEAKAIA (260 aa). Ser277 carries the phosphoserine modification. The segment at 278-295 is membrane-binding amphipathic helix; the sequence is GAGILRMVNKAADAVNKM. Residues 299–519 form the BAR domain; sequence MNESDAWFEE…AFLPEAKAIA (221 aa). Position 469 is an N6-acetyllysine (Lys469).

This sequence belongs to the sorting nexin family. As to quaternary structure, predominantly forms heterodimers with BAR domain-containing sorting nexins SNX5, SNX6 and SNX32; can self-associate to form homodimers. The heterodimers are proposed to self-assemble into helical arrays on the membrane to stabilize and expand local membrane curvature underlying endosomal tubule formation. Thought to be a component of the originally described retromer complex (also called SNX-BAR retromer) which is a pentamer containing the heterotrimeric retromer cargo-selective complex (CSC), also described as vacuolar protein sorting subcomplex (VPS), and a heterodimeric membrane-deforming subcomplex formed between SNX1 or SNX2 and SNX5 or SNX6 (also called SNX-BAR subcomplex); the respective CSC and SNX-BAR subcomplexes associate with low affinity. Interacts with SNX5, SNX6, SNX32, VPS26A, VPS29, VPS35, FNBP1, KALRN, RHOG (GDP-bound form).

Its subcellular location is the early endosome membrane. It localises to the cell projection. The protein resides in the lamellipodium. Involved in several stages of intracellular trafficking. Interacts with membranes containing phosphatidylinositol 3-phosphate (PtdIns(3P)) or phosphatidylinositol 3,5-bisphosphate (PtdIns(3,5)P2). Acts in part as component of the retromer membrane-deforming SNX-BAR subcomplex. The SNX-BAR retromer mediates retrograde transport of cargo proteins from endosomes to the trans-Golgi network (TGN) and is involved in endosome-to-plasma membrane transport for cargo protein recycling. The SNX-BAR subcomplex functions to deform the donor membrane into a tubular profile called endosome-to-TGN transport carrier (ETC). Can sense membrane curvature and has in vitro vesicle-to-membrane remodeling activity. Required for retrograde endosome-to-TGN transport of TGN38. Promotes KALRN- and RHOG-dependent but retromer-independent membrane remodeling such as lamellipodium formation; the function is dependent on GEF activity of KALRN. The sequence is that of Sorting nexin-2 (Snx2) from Mus musculus (Mouse).